Reading from the N-terminus, the 251-residue chain is Probable transcriptional regulatory protein MAB_2888c (251 aa).

The disordered stretch occupies residues 1–20 (MSGHSKWATTKHQKAVKDAR).

The protein belongs to the TACO1 family.

The protein resides in the cytoplasm. The sequence is that of Probable transcriptional regulatory protein MAB_2888c from Mycobacteroides abscessus (strain ATCC 19977 / DSM 44196 / CCUG 20993 / CIP 104536 / JCM 13569 / NCTC 13031 / TMC 1543 / L948) (Mycobacterium abscessus).